A 94-amino-acid chain; its full sequence is Beta-defensin 132 (94 aa).

The N-terminal stretch at 1–22 (MKFLLLVLAALGFLTQVIPASA) is a signal peptide. 2 cysteine pairs are disulfide-bonded: cysteine 27-cysteine 55 and cysteine 39-cysteine 56. The segment at 72–94 (GNHWQSRRNTQRKDKKQQTTVTS) is disordered. Residues 76 to 86 (QSRRNTQRKDK) show a composition bias toward basic residues.

Belongs to the beta-defensin family.

The protein localises to the secreted. Its function is as follows. Has antibacterial activity. The protein is Beta-defensin 132 (DEFB132) of Gorilla gorilla gorilla (Western lowland gorilla).